Here is a 284-residue protein sequence, read N- to C-terminus: MEMO1 family protein MmarC6_1286 (284 aa).

The protein belongs to the MEMO1 family.

The protein is MEMO1 family protein MmarC6_1286 of Methanococcus maripaludis (strain C6 / ATCC BAA-1332).